Consider the following 181-residue polypeptide: UPF0228 protein MA_3117 (181 aa).

This sequence belongs to the UPF0228 family.

The polypeptide is UPF0228 protein MA_3117 (Methanosarcina acetivorans (strain ATCC 35395 / DSM 2834 / JCM 12185 / C2A)).